Consider the following 250-residue polypeptide: Beta-crystallin B1 (250 aa).

A compositionally biased stretch (polar residues) spans 1–13 (MSQAAKASATTAV). The disordered stretch occupies residues 1 to 49 (MSQAAKASATTAVNPGPDGKGKGAPSTGPAPAPGPTPVPASVPRPAAKV). N-acetylserine is present on Ser-2. Positions 2–56 (SQAAKASATTAVNPGPDGKGKGAPSTGPAPAPGPTPVPASVPRPAAKVGDLPPGS) are N-terminal arm. Residues 28-42 (GPAPAPGPTPVPASV) show a composition bias toward pro residues. 2 consecutive Beta/gamma crystallin 'Greek key' domains span residues 57–96 (YRLI…IVVS) and 97–141 (GPWV…RPIR). The connecting peptide stretch occupies residues 142-146 (MDSQE). Beta/gamma crystallin 'Greek key' domains are found at residues 147–188 (HKIC…TVSG) and 189–231 (GTWV…RRLR). Positions 233 to 250 (RQWHQEGCFPVLTAEPPK) are C-terminal arm.

The protein belongs to the beta/gamma-crystallin family. As to quaternary structure, homo/heterodimer, or complexes of higher-order. The structure of beta-crystallin oligomers seems to be stabilized through interactions between the N-terminal arms. Specific cleavages in the N-terminal arm occur during lens maturation and give rise to truncated forms, leading to impaired oligomerization and protein insolubilization. The protease responsible for this partial degradation could be calpain II.

Its function is as follows. Crystallins are the dominant structural components of the vertebrate eye lens. In Mus musculus (Mouse), this protein is Beta-crystallin B1 (Crybb1).